Here is a 123-residue protein sequence, read N- to C-terminus: Large ribosomal subunit protein bL12 (123 aa).

Belongs to the bacterial ribosomal protein bL12 family. As to quaternary structure, homodimer. Part of the ribosomal stalk of the 50S ribosomal subunit. Forms a multimeric L10(L12)X complex, where L10 forms an elongated spine to which 2 to 4 L12 dimers bind in a sequential fashion. Binds GTP-bound translation factors.

In terms of biological role, forms part of the ribosomal stalk which helps the ribosome interact with GTP-bound translation factors. Is thus essential for accurate translation. The protein is Large ribosomal subunit protein bL12 of Neisseria gonorrhoeae (strain NCCP11945).